A 384-amino-acid polypeptide reads, in one-letter code: 8-amino-7-oxononanoate synthase (384 aa).

R21 provides a ligand contact to substrate. 108–109 (GF) is a pyridoxal 5'-phosphate binding site. Position 133 (H133) interacts with substrate. Pyridoxal 5'-phosphate-binding residues include S179, H207, and T233. N6-(pyridoxal phosphate)lysine is present on K236. T350 is a binding site for substrate.

The protein belongs to the class-II pyridoxal-phosphate-dependent aminotransferase family. BioF subfamily. As to quaternary structure, homodimer. Pyridoxal 5'-phosphate is required as a cofactor.

It catalyses the reaction 6-carboxyhexanoyl-[ACP] + L-alanine + H(+) = (8S)-8-amino-7-oxononanoate + holo-[ACP] + CO2. Its pathway is cofactor biosynthesis; biotin biosynthesis. Catalyzes the decarboxylative condensation of pimeloyl-[acyl-carrier protein] and L-alanine to produce 8-amino-7-oxononanoate (AON), [acyl-carrier protein], and carbon dioxide. The chain is 8-amino-7-oxononanoate synthase from Erwinia tasmaniensis (strain DSM 17950 / CFBP 7177 / CIP 109463 / NCPPB 4357 / Et1/99).